Here is a 473-residue protein sequence, read N- to C-terminus: Tubulin gamma chain (473 aa).

The disordered stretch occupies residues 33–56; sequence TDGLSQLPDSSTERDDDTKPFFRE. The segment covering 43–56 has biased composition (basic and acidic residues); sequence STERDDDTKPFFRE. 143-149 contributes to the GTP binding site; sequence AGGTGSG.

Belongs to the tubulin family. As to quaternary structure, interacts with SPC72, SPC97 and SPC98.

The protein localises to the cytoplasm. Its subcellular location is the cytoskeleton. It localises to the microtubule organizing center. The protein resides in the spindle pole body. Tubulin is the major constituent of microtubules. The gamma chain is found at microtubule organizing centers (MTOC) such as the spindle poles or the centrosome, suggesting that it is involved in the minus-end nucleation of microtubule assembly. TUB4 is an important spindle pole body component that organizes both cytoplasmic and nuclear microtubule arrays. In Saccharomyces cerevisiae (strain ATCC 204508 / S288c) (Baker's yeast), this protein is Tubulin gamma chain (TUB4).